A 98-amino-acid polypeptide reads, in one-letter code: NADH-ubiquinone oxidoreductase chain 4L (98 aa).

3 helical membrane-spanning segments follow: residues 2-22 (TLVM…TLMF), 26-46 (LMST…MAVI), and 61-81 (IIIL…LAMV).

This sequence belongs to the complex I subunit 4L family. Core subunit of respiratory chain NADH dehydrogenase (Complex I) which is composed of 45 different subunits.

It localises to the mitochondrion inner membrane. It carries out the reaction a ubiquinone + NADH + 5 H(+)(in) = a ubiquinol + NAD(+) + 4 H(+)(out). In terms of biological role, core subunit of the mitochondrial membrane respiratory chain NADH dehydrogenase (Complex I) which catalyzes electron transfer from NADH through the respiratory chain, using ubiquinone as an electron acceptor. Part of the enzyme membrane arm which is embedded in the lipid bilayer and involved in proton translocation. This chain is NADH-ubiquinone oxidoreductase chain 4L (MT-ND4L), found in Nyctomys sumichrasti (Sumichrast's vesper rat).